The sequence spans 602 residues: Alpha-glucosides permease MPH3 (602 aa).

The Cytoplasmic segment spans residues 1–106; that stretch reads MKNLSFLINR…AAAWSLLVST (106 aa). A helical transmembrane segment spans residues 107-127; that stretch reads TLIMEGYDTAILGAFYALPIF. The Extracellular segment spans residues 128–142; the sequence is QRKFGSQNDKTGEWE. Residues 143-163 traverse the membrane as a helical segment; it reads ISASWQIGLTLCYMAGEIVGL. Topologically, residues 164–178 are cytoplasmic; it reads QLTGPSVDLVGNRYT. Residues 179-199 traverse the membrane as a helical segment; sequence LIIALFFLAAFTFILYFCNSL. Glycine 200 is a topological domain (extracellular). A helical transmembrane segment spans residues 201–221; sequence MIAVGQALCGMPWGCFQCLTV. Over 222–234 the chain is Cytoplasmic; the sequence is SYASEICPLALRY. A helical transmembrane segment spans residues 235-255; it reads YLTTYSNLCWLFGQLFAAGIM. Topologically, residues 256–270 are extracellular; that stretch reads KNSQKKYADSELGYK. The chain crosses the membrane as a helical span at residues 271–291; it reads LPFALQWILPVPLALGIFFAP. Topologically, residues 292–363 are cytoplasmic; the sequence is ESPWWLVKKG…EDKINRRRTR (72 aa). Residues 364-384 form a helical membrane-spanning segment; sequence ITCLCWAGQATCGSILIGYST. At 385 to 397 the chain is on the extracellular side; sequence YFYEKAGVSTEMS. Residues 398–418 traverse the membrane as a helical segment; it reads FTFSIIQYCLGICATFLSWWA. The Cytoplasmic segment spans residues 419–426; the sequence is SKYFGRYD. Residues 427–447 traverse the membrane as a helical segment; the sequence is LYAFGLAFQTIVFFIIGGLGC. The Extracellular portion of the chain corresponds to 448–459; sequence SSTHGSKMGSGS. Residues 460–480 form a helical membrane-spanning segment; the sequence is LLMAVAFFYNLGIAPVVFCLV. The Cytoplasmic portion of the chain corresponds to 481–492; sequence SEMPSSRLRTKT. The chain crosses the membrane as a helical span at residues 493-513; sequence IILARNTYNVVSIICSVLILY. Residues 514-525 lie on the Extracellular side of the membrane; sequence QLNSKKWNWGAK. Residues 526–546 form a helical membrane-spanning segment; it reads SGFFWGVLCFCTLIWAVVDLP. Residues 547–602 lie on the Cytoplasmic side of the membrane; sequence ETAGKTFVEINELFKLGVSARKFKSTKVDPFVVKTPPKDVSHNDPKGDIEASIAEE. A compositionally biased stretch (basic and acidic residues) spans 582-595; it reads PPKDVSHNDPKGDI. The tract at residues 582–602 is disordered; sequence PPKDVSHNDPKGDIEASIAEE.

Belongs to the major facilitator superfamily. Sugar transporter (TC 2.A.1.1) family.

Its subcellular location is the cell membrane. In terms of biological role, high-affinity uptake of maltose and maltotriose. Also transports alpha-methylglucoside, glucose and turanose but not melezitose or trehalose. The polypeptide is Alpha-glucosides permease MPH3 (MPH3) (Saccharomyces cerevisiae (strain ATCC 204508 / S288c) (Baker's yeast)).